A 333-amino-acid polypeptide reads, in one-letter code: Phosphate acyltransferase (333 aa).

The protein belongs to the PlsX family. As to quaternary structure, homodimer. Probably interacts with PlsY.

The protein localises to the cytoplasm. The catalysed reaction is a fatty acyl-[ACP] + phosphate = an acyl phosphate + holo-[ACP]. The protein operates within lipid metabolism; phospholipid metabolism. In terms of biological role, catalyzes the reversible formation of acyl-phosphate (acyl-PO(4)) from acyl-[acyl-carrier-protein] (acyl-ACP). This enzyme utilizes acyl-ACP as fatty acyl donor, but not acyl-CoA. In Lactobacillus acidophilus (strain ATCC 700396 / NCK56 / N2 / NCFM), this protein is Phosphate acyltransferase.